A 267-amino-acid polypeptide reads, in one-letter code: Ribosomal RNA small subunit methyltransferase A (267 aa).

5 residues coordinate S-adenosyl-L-methionine: leucine 20, glycine 45, glutamate 68, aspartate 91, and asparagine 113.

It belongs to the class I-like SAM-binding methyltransferase superfamily. rRNA adenine N(6)-methyltransferase family. RsmA subfamily.

The protein localises to the cytoplasm. It carries out the reaction adenosine(1518)/adenosine(1519) in 16S rRNA + 4 S-adenosyl-L-methionine = N(6)-dimethyladenosine(1518)/N(6)-dimethyladenosine(1519) in 16S rRNA + 4 S-adenosyl-L-homocysteine + 4 H(+). Specifically dimethylates two adjacent adenosines (A1518 and A1519) in the loop of a conserved hairpin near the 3'-end of 16S rRNA in the 30S particle. May play a critical role in biogenesis of 30S subunits. The protein is Ribosomal RNA small subunit methyltransferase A of Blochmanniella pennsylvanica (strain BPEN).